Here is a 1073-residue protein sequence, read N- to C-terminus: Carbamoyl phosphate synthase large chain (1073 aa).

Positions 1–403 are carboxyphosphate synthetic domain; the sequence is MPKRTDIKSI…SLQKALRGLE (403 aa). R129, R169, G175, G176, E208, L210, E215, G241, V242, H243, Q285, and E299 together coordinate ATP. Positions 133–328 constitute an ATP-grasp 1 domain; the sequence is DKAMKSIGLA…IARVAAKLAV (196 aa). 3 residues coordinate Mg(2+): Q285, E299, and N301. Positions 285, 299, and 301 each coordinate Mn(2+). The oligomerization domain stretch occupies residues 404–553; it reads VGVCGLDPKL…YSTYEEECEA (150 aa). The interval 554-935 is carbamoyl phosphate synthetic domain; it reads NPSTRDKIMI…AFAKAQMGAS (382 aa). Residues 678–869 enclose the ATP-grasp 2 domain; the sequence is QQMVERLNLR…LAMIAARVMA (192 aa). R714, H753, L755, E760, G785, V786, H787, S788, Q828, and E840 together coordinate ATP. Residues Q828, E840, and N842 each contribute to the Mg(2+) site. Q828, E840, and N842 together coordinate Mn(2+). Positions 936–1073 constitute an MGS-like domain; that stretch reads EVLPTGGTAF…LQDLHAGLKA (138 aa). Positions 936–1073 are allosteric domain; it reads EVLPTGGTAF…LQDLHAGLKA (138 aa).

This sequence belongs to the CarB family. Composed of two chains; the small (or glutamine) chain promotes the hydrolysis of glutamine to ammonia, which is used by the large (or ammonia) chain to synthesize carbamoyl phosphate. Tetramer of heterodimers (alpha,beta)4. Mg(2+) serves as cofactor. Mn(2+) is required as a cofactor.

The catalysed reaction is hydrogencarbonate + L-glutamine + 2 ATP + H2O = carbamoyl phosphate + L-glutamate + 2 ADP + phosphate + 2 H(+). It carries out the reaction hydrogencarbonate + NH4(+) + 2 ATP = carbamoyl phosphate + 2 ADP + phosphate + 2 H(+). It functions in the pathway amino-acid biosynthesis; L-arginine biosynthesis; carbamoyl phosphate from bicarbonate: step 1/1. Its pathway is pyrimidine metabolism; UMP biosynthesis via de novo pathway; (S)-dihydroorotate from bicarbonate: step 1/3. Large subunit of the glutamine-dependent carbamoyl phosphate synthetase (CPSase). CPSase catalyzes the formation of carbamoyl phosphate from the ammonia moiety of glutamine, carbonate, and phosphate donated by ATP, constituting the first step of 2 biosynthetic pathways, one leading to arginine and/or urea and the other to pyrimidine nucleotides. The large subunit (synthetase) binds the substrates ammonia (free or transferred from glutamine from the small subunit), hydrogencarbonate and ATP and carries out an ATP-coupled ligase reaction, activating hydrogencarbonate by forming carboxy phosphate which reacts with ammonia to form carbamoyl phosphate. This Pseudomonas syringae pv. tomato (strain ATCC BAA-871 / DC3000) protein is Carbamoyl phosphate synthase large chain.